The primary structure comprises 240 residues: Biotin--[acetyl-CoA-carboxylase] ligase (240 aa).

In terms of domain architecture, BPL/LPL catalytic spans 1–176 (MLARTDSTNA…AFARWQAQLD (176 aa)). Residues 7–9 (STN), Q30, 34–36 (RGR), and K102 each bind biotin.

The protein belongs to the biotin--protein ligase family.

It carries out the reaction biotin + L-lysyl-[protein] + ATP = N(6)-biotinyl-L-lysyl-[protein] + AMP + diphosphate + H(+). Its function is as follows. Activates biotin to form biotinyl-5'-adenylate and transfers the biotin moiety to biotin-accepting proteins. The sequence is that of Biotin--[acetyl-CoA-carboxylase] ligase (birA) from Paracoccus denitrificans.